We begin with the raw amino-acid sequence, 366 residues long: Histone-lysine N-methyltransferase SETD7 (366 aa).

MORN repeat units follow at residues 36-58 (FEGNFVHGEKNGRGKFFFFDGST), 59-81 (LEGYYVDDALQGQGVYTYEDGGV), and 106-128 (FKGQYKDNIRHGVCWIYYPDGGS). Positions 214-336 (ERVYVAESLI…ADEELTVAYG (123 aa)) constitute an SET domain. Residues 226–228 (AGE), asparagine 296, histidine 297, and glutamate 356 each bind S-adenosyl-L-methionine.

Belongs to the class V-like SAM-binding methyltransferase superfamily. Histone-lysine methyltransferase family. SET7 subfamily. In terms of assembly, interacts with IPF1/PDX-1. As to expression, widely expressed. Expressed in pancreatic islets.

Its subcellular location is the nucleus. The protein resides in the chromosome. It catalyses the reaction L-lysyl(4)-[histone H3] + S-adenosyl-L-methionine = N(6)-methyl-L-lysyl(4)-[histone H3] + S-adenosyl-L-homocysteine + H(+). The catalysed reaction is L-lysyl-[protein] + S-adenosyl-L-methionine = N(6)-methyl-L-lysyl-[protein] + S-adenosyl-L-homocysteine + H(+). Functionally, histone methyltransferase that specifically monomethylates 'Lys-4' of histone H3. H3 'Lys-4' methylation represents a specific tag for epigenetic transcriptional activation. Plays a central role in the transcriptional activation of genes such as collagenase or insulin. Recruited by IPF1/PDX-1 to the insulin promoter, leading to activate transcription. Also has methyltransferase activity toward non-histone proteins such as CGAS, p53/TP53, TAF10, and possibly TAF7 by recognizing and binding the [KR]-[STA]-K in substrate proteins. Monomethylates 'Lys-189' of TAF10, leading to increase the affinity of TAF10 for RNA polymerase II. Monomethylates 'Lys-372' of p53/TP53, stabilizing p53/TP53 and increasing p53/TP53-mediated transcriptional activation. Monomethylates 'Lys-491' of CGAS, promoting interaction between SGF29 and CGAS. The protein is Histone-lysine N-methyltransferase SETD7 (SETD7) of Homo sapiens (Human).